Consider the following 205-residue polypeptide: Holliday junction branch migration complex subunit RuvA (205 aa).

Residues 1–64 (MIGKLKGVID…EDMIRLYGFA (64 aa)) form a domain I region. The segment at 65–143 (TQLEREWFRL…AFAGEASGTI (79 aa)) is domain II. A flexible linker region spans residues 144–152 (GLKQELGAG). The domain III stretch occupies residues 153–205 (AAPAPVADAVSALSNLGYSRDQAANAVAAALKETGEGADSAKLIRLGLKELSQ).

It belongs to the RuvA family. As to quaternary structure, homotetramer. Forms an RuvA(8)-RuvB(12)-Holliday junction (HJ) complex. HJ DNA is sandwiched between 2 RuvA tetramers; dsDNA enters through RuvA and exits via RuvB. An RuvB hexamer assembles on each DNA strand where it exits the tetramer. Each RuvB hexamer is contacted by two RuvA subunits (via domain III) on 2 adjacent RuvB subunits; this complex drives branch migration. In the full resolvosome a probable DNA-RuvA(4)-RuvB(12)-RuvC(2) complex forms which resolves the HJ.

The protein localises to the cytoplasm. Its function is as follows. The RuvA-RuvB-RuvC complex processes Holliday junction (HJ) DNA during genetic recombination and DNA repair, while the RuvA-RuvB complex plays an important role in the rescue of blocked DNA replication forks via replication fork reversal (RFR). RuvA specifically binds to HJ cruciform DNA, conferring on it an open structure. The RuvB hexamer acts as an ATP-dependent pump, pulling dsDNA into and through the RuvAB complex. HJ branch migration allows RuvC to scan DNA until it finds its consensus sequence, where it cleaves and resolves the cruciform DNA. This chain is Holliday junction branch migration complex subunit RuvA, found in Brucella abortus (strain S19).